A 511-amino-acid chain; its full sequence is Maturase K (511 aa).

This sequence belongs to the intron maturase 2 family. MatK subfamily.

It localises to the plastid. Its subcellular location is the chloroplast. Its function is as follows. Usually encoded in the trnK tRNA gene intron. Probably assists in splicing its own and other chloroplast group II introns. The protein is Maturase K of Hordeum vulgare subsp. spontaneum (Wild barley).